The chain runs to 157 residues: Transcription elongation factor GreB (157 aa).

It belongs to the GreA/GreB family. GreB subfamily.

Necessary for efficient RNA polymerase transcription elongation past template-encoded arresting sites. The arresting sites in DNA have the property of trapping a certain fraction of elongating RNA polymerases that pass through, resulting in locked ternary complexes. Cleavage of the nascent transcript by cleavage factors such as GreA or GreB allows the resumption of elongation from the new 3'terminus. GreB releases sequences of up to 9 nucleotides in length. The protein is Transcription elongation factor GreB of Salmonella typhimurium (strain LT2 / SGSC1412 / ATCC 700720).